A 23-amino-acid chain; its full sequence is M-myrmeciitoxin-Mp2b (23 aa).

Gln23 is subject to Glutamine amide.

Belongs to the formicidae venom precursor-01 superfamily. Ant pilosulin family. As to quaternary structure, heterodimer with M-MIITX-Mp2a (pilosulin-3a) (AC Q26464); disulfide-linked. Only heterodimers (and not monomers) have been identified in the venom. As to expression, expressed by the venom gland.

The protein resides in the secreted. In terms of biological role, heterodimer protein that may serve both defensive (pain-inducing) and predatory (insecticidal) roles. Has membrane-disrupting activity and shows induction of non-specific calcium influx into cells,. Shows broad-spectrum activity against a diverse range of bacteria, and cell lines, as well as hemolytic activity (EC(50)=2.18 uM). In vivo, shows moderate insecticidal activity against D.melanogaster and potent anthelmintic activity against the veterinary nematode H.contortus. In addition, intraplantar injection into mice induces nocifensive behavior and mechanical allodynia. The sequence is that of M-myrmeciitoxin-Mp2b from Myrmecia pilosula (Jack jumper ant).